The chain runs to 541 residues: Formimidoyltransferase-cyclodeaminase (541 aa).

Residues 1-181 (MSQLVECVPN…GATVTGARKF (181 aa)) form a formiminotransferase N-subdomain region. The For formimidoyltransferase activity role is filled by His-82. A folate-binding site is contributed by 163 to 172 (GPSSFVPSWG). The formiminotransferase C-subdomain stretch occupies residues 182–326 (LIAFNINLLS…PKERIIEYLV (145 aa)). Positions 327–334 (PDSGPEQS) are linker. Residues 335–541 (LLDASLRAFV…VLGSLEARKE (207 aa)) are cyclodeaminase/cyclohydrolase. Asp-412 functions as the For cyclodeaminase activity in the catalytic mechanism. At Ser-520 the chain carries Phosphoserine.

It in the C-terminal section; belongs to the cyclodeaminase/cyclohydrolase family. The protein in the N-terminal section; belongs to the formiminotransferase family. As to quaternary structure, homooctamer, including four polyglutamate binding sites. The subunits are arranged as a tetramer of dimers, and form a planar ring-shaped structure. Specifically expressed in liver (at protein level).

It localises to the cytoplasm. The protein localises to the cytosol. It is found in the golgi apparatus. Its subcellular location is the cytoskeleton. The protein resides in the microtubule organizing center. It localises to the centrosome. The protein localises to the centriole. It catalyses the reaction 5-formimidoyltetrahydrofolate + L-glutamate = N-formimidoyl-L-glutamate + (6S)-5,6,7,8-tetrahydrofolate. The catalysed reaction is 5-formimidoyltetrahydrofolate + 2 H(+) = (6R)-5,10-methenyltetrahydrofolate + NH4(+). Its pathway is amino-acid degradation; L-histidine degradation into L-glutamate; L-glutamate from N-formimidoyl-L-glutamate (transferase route): step 1/1. Folate-dependent enzyme, that displays both transferase and deaminase activity. Serves to channel one-carbon units from formiminoglutamate to the folate pool. In terms of biological role, binds and promotes bundling of vimentin filaments originating from the Golgi. The polypeptide is Formimidoyltransferase-cyclodeaminase (Ftcd) (Rattus norvegicus (Rat)).